The primary structure comprises 523 residues: Histidine ammonia-lyase (523 aa).

Positions 148-150 (ASG) form a cross-link, 5-imidazolinone (Ala-Gly). S149 carries the post-translational modification 2,3-didehydroalanine (Ser).

This sequence belongs to the PAL/histidase family. Post-translationally, contains an active site 4-methylidene-imidazol-5-one (MIO), which is formed autocatalytically by cyclization and dehydration of residues Ala-Ser-Gly.

The protein localises to the cytoplasm. The catalysed reaction is L-histidine = trans-urocanate + NH4(+). It functions in the pathway amino-acid degradation; L-histidine degradation into L-glutamate; N-formimidoyl-L-glutamate from L-histidine: step 1/3. This is Histidine ammonia-lyase from Chloroflexus aurantiacus (strain ATCC 29366 / DSM 635 / J-10-fl).